Consider the following 110-residue polypeptide: Large ribosomal subunit protein uL22 (110 aa).

This sequence belongs to the universal ribosomal protein uL22 family. Part of the 50S ribosomal subunit.

Functionally, this protein binds specifically to 23S rRNA; its binding is stimulated by other ribosomal proteins, e.g. L4, L17, and L20. It is important during the early stages of 50S assembly. It makes multiple contacts with different domains of the 23S rRNA in the assembled 50S subunit and ribosome. Its function is as follows. The globular domain of the protein is located near the polypeptide exit tunnel on the outside of the subunit, while an extended beta-hairpin is found that lines the wall of the exit tunnel in the center of the 70S ribosome. The chain is Large ribosomal subunit protein uL22 from Bdellovibrio bacteriovorus (strain ATCC 15356 / DSM 50701 / NCIMB 9529 / HD100).